Consider the following 39-residue polypeptide: uncharacterized protein (39 aa).

The protein belongs to the asfivirus C84L family.

This is an uncharacterized protein from African swine fever virus (isolate Warthog/Namibia/Wart80/1980) (ASFV).